We begin with the raw amino-acid sequence, 384 residues long: Dual-specificity RNA methyltransferase RlmN (384 aa).

Glu-105 serves as the catalytic Proton acceptor. The Radical SAM core domain maps to 111–350; sequence EDDRATLCVS…TIVRKTRGDD (240 aa). Residues Cys-118 and Cys-355 are joined by a disulfide bond. 3 residues coordinate [4Fe-4S] cluster: Cys-125, Cys-129, and Cys-132. Residues 179–180, Ser-211, 233–235, and Asn-312 contribute to the S-adenosyl-L-methionine site; these read GE and SLH. Cys-355 serves as the catalytic S-methylcysteine intermediate.

It belongs to the radical SAM superfamily. RlmN family. Requires [4Fe-4S] cluster as cofactor.

The protein resides in the cytoplasm. It catalyses the reaction adenosine(2503) in 23S rRNA + 2 reduced [2Fe-2S]-[ferredoxin] + 2 S-adenosyl-L-methionine = 2-methyladenosine(2503) in 23S rRNA + 5'-deoxyadenosine + L-methionine + 2 oxidized [2Fe-2S]-[ferredoxin] + S-adenosyl-L-homocysteine. The enzyme catalyses adenosine(37) in tRNA + 2 reduced [2Fe-2S]-[ferredoxin] + 2 S-adenosyl-L-methionine = 2-methyladenosine(37) in tRNA + 5'-deoxyadenosine + L-methionine + 2 oxidized [2Fe-2S]-[ferredoxin] + S-adenosyl-L-homocysteine. Its function is as follows. Specifically methylates position 2 of adenine 2503 in 23S rRNA and position 2 of adenine 37 in tRNAs. m2A2503 modification seems to play a crucial role in the proofreading step occurring at the peptidyl transferase center and thus would serve to optimize ribosomal fidelity. This Escherichia coli O17:K52:H18 (strain UMN026 / ExPEC) protein is Dual-specificity RNA methyltransferase RlmN.